The following is a 152-amino-acid chain: Large ribosomal subunit protein bL21 (152 aa).

Residues 115–152 form a disordered region; that stretch reads VTSISNGEKPKKATTSAKPNTKKPSTAVKSSKVEKTPE. The span at 127–143 shows a compositional bias: polar residues; it reads ATTSAKPNTKKPSTAVK.

It belongs to the bacterial ribosomal protein bL21 family. As to quaternary structure, part of the 50S ribosomal subunit. Contacts protein L20.

In terms of biological role, this protein binds to 23S rRNA in the presence of protein L20. The protein is Large ribosomal subunit protein bL21 of Prochlorococcus marinus (strain SARG / CCMP1375 / SS120).